The following is a 66-amino-acid chain: Beta-mammal toxin Co1 (66 aa).

Residues 1-66 (KEGYLVNHST…VWPLPKKTCN (66 aa)) enclose the LCN-type CS-alpha/beta domain. 4 cysteine pairs are disulfide-bonded: Cys12/Cys65, Cys16/Cys41, Cys25/Cys46, and Cys29/Cys48.

In terms of tissue distribution, expressed by the venom gland.

It is found in the secreted. In terms of biological role, beta toxins bind voltage-independently at site-4 of sodium channels (Nav) and shift the voltage of activation toward more negative potentials thereby affecting sodium channel activation and promoting spontaneous and repetitive firing. This toxin acts on human Nav1.6/SCN8A voltage-gated sodium channels. In vivo, is lethal to mice 40 minutes after intraperitoneal injection at a dose of 5ug. No activity is observed when injected into crickets or woodlice. The polypeptide is Beta-mammal toxin Co1 (Centruroides ornatus (Scorpion)).